We begin with the raw amino-acid sequence, 346 residues long: Protein RecA (346 aa).

67 to 74 (GPESSGKT) is an ATP binding site.

This sequence belongs to the RecA family.

It is found in the cytoplasm. Can catalyze the hydrolysis of ATP in the presence of single-stranded DNA, the ATP-dependent uptake of single-stranded DNA by duplex DNA, and the ATP-dependent hybridization of homologous single-stranded DNAs. It interacts with LexA causing its activation and leading to its autocatalytic cleavage. In Mycobacteroides abscessus (strain ATCC 19977 / DSM 44196 / CCUG 20993 / CIP 104536 / JCM 13569 / NCTC 13031 / TMC 1543 / L948) (Mycobacterium abscessus), this protein is Protein RecA.